We begin with the raw amino-acid sequence, 925 residues long: Alanine--tRNA ligase (925 aa).

Residues histidine 611, histidine 615, cysteine 714, and histidine 718 each coordinate Zn(2+).

It belongs to the class-II aminoacyl-tRNA synthetase family. Requires Zn(2+) as cofactor.

The protein localises to the cytoplasm. The catalysed reaction is tRNA(Ala) + L-alanine + ATP = L-alanyl-tRNA(Ala) + AMP + diphosphate. Its function is as follows. Catalyzes the attachment of alanine to tRNA(Ala) in a two-step reaction: alanine is first activated by ATP to form Ala-AMP and then transferred to the acceptor end of tRNA(Ala). Also edits incorrectly charged Ser-tRNA(Ala) and Gly-tRNA(Ala) via its editing domain. The protein is Alanine--tRNA ligase of Methanosarcina acetivorans (strain ATCC 35395 / DSM 2834 / JCM 12185 / C2A).